The sequence spans 469 residues: Glutamate--tRNA ligase (469 aa).

The short motif at 11–21 (PSPTGFIHLGN) is the 'HIGH' region element. Positions 114–131 (QREAGEKPRYDGTWRPEP) are enriched in basic and acidic residues. A disordered region spans residues 114 to 139 (QREAGEKPRYDGTWRPEPGKVLPEPP). A 'KMSKS' region motif is present at residues 243-247 (KMSKR). K246 is an ATP binding site.

The protein belongs to the class-I aminoacyl-tRNA synthetase family. Glutamate--tRNA ligase type 1 subfamily. As to quaternary structure, monomer.

The protein resides in the cytoplasm. It carries out the reaction tRNA(Glu) + L-glutamate + ATP = L-glutamyl-tRNA(Glu) + AMP + diphosphate. Its function is as follows. Catalyzes the attachment of glutamate to tRNA(Glu) in a two-step reaction: glutamate is first activated by ATP to form Glu-AMP and then transferred to the acceptor end of tRNA(Glu). This is Glutamate--tRNA ligase from Paraburkholderia xenovorans (strain LB400).